The sequence spans 338 residues: Replication factor C small subunit (338 aa).

Residue 53-60 (GPPGVGKT) participates in ATP binding.

Belongs to the activator 1 small subunits family. RfcS subfamily. Heteromultimer composed of small subunits (RfcS) and large subunits (RfcL).

Its function is as follows. Part of the RFC clamp loader complex which loads the PCNA sliding clamp onto DNA. The sequence is that of Replication factor C small subunit from Methanosarcina acetivorans (strain ATCC 35395 / DSM 2834 / JCM 12185 / C2A).